Here is a 499-residue protein sequence, read N- to C-terminus: Glycerol kinase (499 aa).

Threonine 13 is a binding site for ADP. ATP-binding residues include threonine 13, threonine 14, and serine 15. Threonine 13 contacts sn-glycerol 3-phosphate. An ADP-binding site is contributed by arginine 17. Residues arginine 83, glutamate 84, tyrosine 135, and aspartate 245 each contribute to the sn-glycerol 3-phosphate site. Residues arginine 83, glutamate 84, tyrosine 135, aspartate 245, and glutamine 246 each contribute to the glycerol site. ADP is bound by residues threonine 267 and glycine 310. ATP contacts are provided by threonine 267, glycine 310, glutamine 314, and glycine 411. Glycine 411 and asparagine 415 together coordinate ADP.

The protein belongs to the FGGY kinase family.

It catalyses the reaction glycerol + ATP = sn-glycerol 3-phosphate + ADP + H(+). The protein operates within polyol metabolism; glycerol degradation via glycerol kinase pathway; sn-glycerol 3-phosphate from glycerol: step 1/1. With respect to regulation, inhibited by fructose 1,6-bisphosphate (FBP). In terms of biological role, key enzyme in the regulation of glycerol uptake and metabolism. Catalyzes the phosphorylation of glycerol to yield sn-glycerol 3-phosphate. The sequence is that of Glycerol kinase from Stenotrophomonas maltophilia (strain R551-3).